A 47-amino-acid polypeptide reads, in one-letter code: PhoP/PhoQ regulator MgrB (47 aa).

The helical transmembrane segment at 6–26 (WVVLVVVVLACLLLWAQVFNM) threads the bilayer.

Belongs to the MgrB family. As to quaternary structure, may form homooligomers. Probably interacts with the periplasmic domain of PhoQ.

Its subcellular location is the cell inner membrane. Functionally, phoP-regulated transcription is redox-sensitive, being activated when the periplasm becomes more reducing. MgrB acts between DsbA/DsbB and PhoP/PhoQ in this pathway. Represses PhoP/PhoQ signaling, possibly by binding to the periplasmic domain of PhoQ, altering its activity and that of downstream effector PhoP. This Escherichia coli O157:H7 protein is PhoP/PhoQ regulator MgrB.